Here is a 193-residue protein sequence, read N- to C-terminus: MAVQKNVIKGILAGTFALMLSGCVTVPDAIKGSSPTPQQDLVRVMSAPQLYVGQEARFGGKVVAVQNQQGKTRLEIATVPLDSGARPTLGEPSRGRIYADVNGFLDPVDFRGQLVTVVGPITGAVDGKIGNTPYKFMVMQVTGYKRWHLTQQVIMPPQPIDPWFYGGRGWPYGYGGWGWYNPGPARVQTVVTE.

The N-terminal stretch at 1-22 (MAVQKNVIKGILAGTFALMLSG) is a signal peptide. Residue Cys23 is the site of N-palmitoyl cysteine attachment. Residue Cys23 is the site of S-diacylglycerol cysteine attachment.

It is found in the cell membrane. This is an uncharacterized protein from Escherichia coli (strain K12).